The primary structure comprises 465 residues: Kynurenine 3-monooxygenase (465 aa).

The disordered stretch occupies residues 1–26 (MSPGIVSQEVNGRQEPTEAARDERHG). The span at 15–25 (EPTEAARDERH) shows a compositional bias: basic and acidic residues. 2 consecutive transmembrane segments (helical) span residues 405–427 (LLFR…SMPY) and 440–462 (LLKR…IYAQ).

It belongs to the aromatic-ring hydroxylase family. KMO subfamily. FAD is required as a cofactor.

It is found in the mitochondrion. The protein localises to the membrane. The catalysed reaction is L-kynurenine + NADPH + O2 + H(+) = 3-hydroxy-L-kynurenine + NADP(+) + H2O. The protein operates within cofactor biosynthesis; NAD(+) biosynthesis; quinolinate from L-kynurenine: step 1/3. Functionally, catalyzes the hydroxylation of L-kynurenine (L-Kyn) to form 3-hydroxy-L-kynurenine (L-3OHKyn). Required for synthesis of quinolinic acid. The sequence is that of Kynurenine 3-monooxygenase from Drosophila melanogaster (Fruit fly).